Consider the following 580-residue polypeptide: MTLFILTETSAGYALLKAKDKKLLKRDDLATEASTAEGVSNLLKLKSFQKFDSAATALEEVASLVEGKVTPRLASLLDEVKDEKKVSLAVADPKLGNAIGKLPGLSIELVADSSTTDVFRAIREHLPTLIPGLLPQDMSTMSLGLSHSLARHKLKFSPDKIDTMIVQAIGLLDDLDKELNNYAMRVKEWYGWHFPELAKILNDNIAYARLVLKMGMRTNWESSDLAEILPEEIEGAVKAAADRSMGTEISQEDLEHIQALAEQVVGFAEYRQQLAGYLTARMNAIAPNLTALVGDLVGARLIAHAGSLTNLSKSPASTLQILGAEKALFRALKTKHDTPKYGLIYHASLIGQATGKNKGKMARVLAAKASLGLRVDALAEWDDDATEEDKAALGTEARYNLERKLAAMEGKPLKPRGVAIAPNGAPQAQKFEINEARKYNADADAVTGDEPASAKKSKSKKLVEEVQDEEMADAADSDEESDSSDEETDKKSKKSKDSELEKLAEKAGLSLKRYKRKLERGEIQFDAEGNPSAVSKKDIKKAKKEAKKSAKGEEKKRKRTDDGEVDNSEKKKKKKKKGEE.

Residues 285-410 (IAPNLTALVG…LERKLAAMEG (126 aa)) form the Nop domain. Positions 444–580 (DAVTGDEPAS…KKKKKKKGEE (137 aa)) are disordered. The segment covering 465–487 (EVQDEEMADAADSDEESDSSDEE) has biased composition (acidic residues). 2 stretches are compositionally biased toward basic and acidic residues: residues 495–505 (SKDSELEKLAE) and 547–562 (KKSAKGEEKKRKRTDD). Basic residues predominate over residues 570 to 580 (KKKKKKKKGEE).

Belongs to the NOP5/NOP56 family.

Its subcellular location is the nucleus. The protein resides in the nucleolus. Required for pre-18S rRNA processing. May bind microtubules. The protein is Nucleolar protein 58 (nop58) of Aspergillus niger (strain ATCC MYA-4892 / CBS 513.88 / FGSC A1513).